Reading from the N-terminus, the 126-residue chain is Aspartate 1-decarboxylase (126 aa).

Serine 25 functions as the Schiff-base intermediate with substrate; via pyruvic acid in the catalytic mechanism. Position 25 is a pyruvic acid (Ser) (serine 25). Residue threonine 57 coordinates substrate. Tyrosine 58 functions as the Proton donor in the catalytic mechanism. 72–74 contributes to the substrate binding site; it reads GAA.

Belongs to the PanD family. As to quaternary structure, heterooctamer of four alpha and four beta subunits. Pyruvate serves as cofactor. Post-translationally, is synthesized initially as an inactive proenzyme, which is activated by self-cleavage at a specific serine bond to produce a beta-subunit with a hydroxyl group at its C-terminus and an alpha-subunit with a pyruvoyl group at its N-terminus.

It is found in the cytoplasm. The catalysed reaction is L-aspartate + H(+) = beta-alanine + CO2. The protein operates within cofactor biosynthesis; (R)-pantothenate biosynthesis; beta-alanine from L-aspartate: step 1/1. Functionally, catalyzes the pyruvoyl-dependent decarboxylation of aspartate to produce beta-alanine. This is Aspartate 1-decarboxylase from Campylobacter jejuni subsp. jejuni serotype O:6 (strain 81116 / NCTC 11828).